A 322-amino-acid polypeptide reads, in one-letter code: tRNA U34 carboxymethyltransferase (322 aa).

Residues K91, W105, K110, G129, 179–180 (LE), M195, Y199, and R314 contribute to the carboxy-S-adenosyl-L-methionine site.

It belongs to the class I-like SAM-binding methyltransferase superfamily. CmoB family. Homotetramer.

It catalyses the reaction carboxy-S-adenosyl-L-methionine + 5-hydroxyuridine(34) in tRNA = 5-carboxymethoxyuridine(34) in tRNA + S-adenosyl-L-homocysteine + H(+). In terms of biological role, catalyzes carboxymethyl transfer from carboxy-S-adenosyl-L-methionine (Cx-SAM) to 5-hydroxyuridine (ho5U) to form 5-carboxymethoxyuridine (cmo5U) at position 34 in tRNAs. The polypeptide is tRNA U34 carboxymethyltransferase (Pseudomonas aeruginosa (strain ATCC 15692 / DSM 22644 / CIP 104116 / JCM 14847 / LMG 12228 / 1C / PRS 101 / PAO1)).